The sequence spans 166 residues: Regulator of ribonuclease activity A (166 aa).

It belongs to the RraA family. As to quaternary structure, homotrimer. Binds to both RNA-binding sites in the C-terminal region of Rne and to RhlB.

It localises to the cytoplasm. Its function is as follows. Globally modulates RNA abundance by binding to RNase E (Rne) and regulating its endonucleolytic activity. Can modulate Rne action in a substrate-dependent manner by altering the composition of the degradosome. Modulates RNA-binding and helicase activities of the degradosome. This chain is Regulator of ribonuclease activity A, found in Actinobacillus succinogenes (strain ATCC 55618 / DSM 22257 / CCUG 43843 / 130Z).